A 397-amino-acid chain; its full sequence is Penicillopepsin-1 (397 aa).

The N-terminal stretch at 1–20 (MVVFSQVTVALTCFSAIASA) is a signal peptide. Residues 21 to 71 (AAVRQEPPQGFTVNQVQKAVPGTRTVNLPGLYANALVKYGATVPATVHAAA) constitute a propeptide, activation peptide. One can recognise a Peptidase A1 domain in the interval 87–394 (YLTPVTIGSS…DSEGPRLGFA (308 aa)). Active-site residues include aspartate 103 and aspartate 285. Asparagine 311 carries N-linked (GlcNAc...) asparagine glycosylation. Cysteines 322 and 357 form a disulfide.

It belongs to the peptidase A1 family. As to quaternary structure, monomer.

The protein localises to the secreted. The enzyme catalyses Hydrolysis of proteins with broad specificity similar to that of pepsin A, preferring hydrophobic residues at P1 and P1', but also cleaving 20-Gly-|-Glu-21 in the B chain of insulin. Clots milk, and activates trypsinogen.. Functionally, secreted aspartic endopeptidase that allows assimilation of proteinaceous substrates. The scissile peptide bond is attacked by a nucleophilic water molecule activated by two aspartic residues in the active site. Shows a broad primary substrate specificity. Favors hydrophobic residues at the P1 and P1' positions, but can also activate trypsinogen and hydrolyze the B chain of insulin between positions 'Gly-20' and 'Glu-21'. This Penicillium roqueforti protein is Penicillopepsin-1.